Consider the following 190-residue polypeptide: Hypoxanthine/guanine phosphoribosyltransferase (190 aa).

The protein belongs to the purine/pyrimidine phosphoribosyltransferase family. Archaeal HPRT subfamily. Homodimer.

It is found in the cytoplasm. It carries out the reaction IMP + diphosphate = hypoxanthine + 5-phospho-alpha-D-ribose 1-diphosphate. The enzyme catalyses GMP + diphosphate = guanine + 5-phospho-alpha-D-ribose 1-diphosphate. Its pathway is purine metabolism; IMP biosynthesis via salvage pathway; IMP from hypoxanthine: step 1/1. In terms of biological role, catalyzes a salvage reaction resulting in the formation of IMP that is energically less costly than de novo synthesis. In Methanobacterium paludis (strain DSM 25820 / JCM 18151 / SWAN1), this protein is Hypoxanthine/guanine phosphoribosyltransferase.